The following is a 428-amino-acid chain: Phosphomethylpyrimidine synthase 1 (428 aa).

Substrate contacts are provided by residues Met-94, Tyr-123, His-162, 184–186 (SRG), 225–228 (NGMR), and Glu-264. Residue His-268 participates in Zn(2+) binding. Residue Tyr-291 coordinates substrate. His-332 serves as a coordination point for Zn(2+). [4Fe-4S] cluster-binding residues include Cys-408, Cys-411, and Cys-415.

This sequence belongs to the ThiC family. [4Fe-4S] cluster serves as cofactor.

It carries out the reaction 5-amino-1-(5-phospho-beta-D-ribosyl)imidazole + S-adenosyl-L-methionine = 4-amino-2-methyl-5-(phosphooxymethyl)pyrimidine + CO + 5'-deoxyadenosine + formate + L-methionine + 3 H(+). It functions in the pathway cofactor biosynthesis; thiamine diphosphate biosynthesis. In terms of biological role, catalyzes the synthesis of the hydroxymethylpyrimidine phosphate (HMP-P) moiety of thiamine from aminoimidazole ribotide (AIR) in a radical S-adenosyl-L-methionine (SAM)-dependent reaction. The sequence is that of Phosphomethylpyrimidine synthase 1 from Methanosarcina barkeri (strain Fusaro / DSM 804).